The chain runs to 175 residues: Peptide methionine sulfoxide reductase MsrA (175 aa).

Residue C10 is part of the active site.

This sequence belongs to the MsrA Met sulfoxide reductase family.

The enzyme catalyses L-methionyl-[protein] + [thioredoxin]-disulfide + H2O = L-methionyl-(S)-S-oxide-[protein] + [thioredoxin]-dithiol. The catalysed reaction is [thioredoxin]-disulfide + L-methionine + H2O = L-methionine (S)-S-oxide + [thioredoxin]-dithiol. In terms of biological role, has an important function as a repair enzyme for proteins that have been inactivated by oxidation. Catalyzes the reversible oxidation-reduction of methionine sulfoxide in proteins to methionine. The protein is Peptide methionine sulfoxide reductase MsrA of Psychrobacter sp. (strain PRwf-1).